Reading from the N-terminus, the 861-residue chain is MEGQKSNASWESSIIEGQLSKNLARYTLLLDKLSTLSQIDKLSEVIANDYAKQSKQLNAFVQQSQSSLNKESRKLELQRTNLTTTLTQFHETVATISSSNARAKAIHDDIETVDQERALVNKTLQFVKDVRTLKNNISLAHSALETKDYLVAATAINEIRSLPDKKLIVSEFAKKVVPSSEIPEEPAILIKNWCKELTSLFQEQFMEATRTQDIKELTLMFKMFPMIGQDVLGLDLYSKYVCDIIADESRKIMSNSMENSTKFQGFFSQVLLHLFKIVSTIINDHSKVIATCYGKKHMVHVMEKVEKEADLQASLILDIFMETRKIERTIHDINEWEHSQKNEDVNIDSNQSDIETDGETEKSSIISIHDLALLIMEFSQILQNWSMYSRFYSVKWNEFSDLHPHVLQPPPPIADGKFALKLKQDKVFDEFQVFVLNHLQRSFRNSISLEELPSLNDLITAVPLNDHDNISYPVTSVLDDLILLVRKNLISVVNTGQFKLLASFLNELVKFFQNRFLVKFMQNKFKLLQSKLASNVSLKRYIPKGEEQSATSRSVSPPANKFSPLSRFTFRGAAASALTNIQSNLQAVVAEDEDSILALHHYLIYLNTLYLSKVYVHRLLSIEILEDDSQRILRDNFPFDNDAAQLQNLIINSEKLVLEQTDKLSKWAVKYLFQNILQNRVRNLLGTVFVNSASSNSSTSNQKNVSRDYSAGSNQKNYITSIEDFEDLSQINSFNSKWNQLIIPYKNILHNEAYAELLSVIVDYIVTTLEQRIWTLEFNELGVTKLDRELSLFIGNMCGLNYNLREKFLKLTQIVLLLGLDDDNFDLTTGDIKDDFNGTFDWVINSQERIKARNMKIDRTQ.

Belongs to the COG4 family. Component of the conserved oligomeric Golgi (COG or Sec34/Sec35) complex which consists of eight different proteins COG1-COG8.

It localises to the golgi apparatus membrane. Functionally, acts as essential component of the peripheral membrane COG complex that is involved in intra-Golgi protein trafficking. COG is located at the cis-Golgi, and regulates tethering of retrograde intra-Golgi vesicles and possibly a number of other membrane trafficking events. Possesses ATPase activity. This chain is Conserved oligomeric Golgi complex subunit 4 (COG4), found in Saccharomyces cerevisiae (strain ATCC 204508 / S288c) (Baker's yeast).